Reading from the N-terminus, the 310-residue chain is 26S proteasome non-ATPase regulatory subunit 14 (310 aa).

Positions 31–166 (VYISSLALLK…IDAFRLINAN (136 aa)) constitute an MPN domain. His-113, His-115, and Asp-126 together coordinate Zn(2+). The JAMM motif signature appears at 113–126 (HSHPGFGCWLSGVD). Phosphoserine occurs at positions 150 and 224. Thr-266 bears the Phosphothreonine mark.

This sequence belongs to the peptidase M67A family. PSMD14 subfamily. As to quaternary structure, component of the 19S proteasome regulatory particle complex. The 26S proteasome consists of a 20S core particle (CP) and two 19S regulatory subunits (RP). The regulatory particle is made of a lid composed of 9 subunits including PSMD4, a base containing 6 ATPases and few additional components. Within the complex, PSMD4 interacts with subunit PSMD7 through their respective MPN domain. Interacts with TXNL1. Widely expressed. Highest levels in heart and skeletal muscle.

Component of the 26S proteasome, a multiprotein complex involved in the ATP-dependent degradation of ubiquitinated proteins. This complex plays a key role in the maintenance of protein homeostasis by removing misfolded or damaged proteins, which could impair cellular functions, and by removing proteins whose functions are no longer required. Therefore, the proteasome participates in numerous cellular processes, including cell cycle progression, apoptosis, or DNA damage repair. The PSMD14 subunit is a metalloprotease that specifically cleaves 'Lys-63'-linked polyubiquitin chains within the complex. Plays a role in response to double-strand breaks (DSBs): acts as a regulator of non-homologous end joining (NHEJ) by cleaving 'Lys-63'-linked polyubiquitin, thereby promoting retention of JMJD2A/KDM4A on chromatin and restricting TP53BP1 accumulation. Also involved in homologous recombination repair by promoting RAD51 loading. The polypeptide is 26S proteasome non-ATPase regulatory subunit 14 (PSMD14) (Homo sapiens (Human)).